Consider the following 1235-residue polypeptide: Cullin-associated NEDD8-dissociated protein 2 (1235 aa).

Ser-2 bears the N-acetylserine mark. HEAT repeat units lie at residues Ser-2–Ile-39, Asp-44–Glu-81, Gln-83–Pro-119, Asn-129–Ala-167, Thr-171–Thr-208, Leu-210–Arg-246, Ala-254–Lys-291, Thr-326–Asp-367, Asp-371–Pro-408, Ala-431–Gly-468, Pro-516–Pro-553, Pro-564–Asp-603, Asp-607–Asp-644, Pro-647–Leu-684, Pro-689–Ser-726, Glu-730–Pro-769, Val-771–Ala-812, Gly-856–Pro-893, Phe-895–Lys-930, Tyr-932–Val-965, Asn-966–His-1002, Pro-1006–Ser-1043, Asp-1047–Leu-1083, Leu-1104–Ala-1140, Thr-1156–Val-1193, and Ser-1203–Ser-1235. The tract at residues Tyr-314–Asp-345 is disordered. Over residues Asp-317–Asp-345 the composition is skewed to acidic residues.

Belongs to the CAND family. In terms of assembly, binds TBP, CNOT3 and UBE3C. Post-translationally, ubiquitinated and targeted for proteasomal degradation. In terms of tissue distribution, highly expressed in embryonic limb buds.

It is found in the nucleus. In terms of biological role, probable assembly factor of SCF (SKP1-CUL1-F-box protein) E3 ubiquitin ligase complexes that promotes the exchange of the substrate-recognition F-box subunit in SCF complexes, thereby playing a key role in the cellular repertoire of SCF complexes. The polypeptide is Cullin-associated NEDD8-dissociated protein 2 (Cand2) (Mus musculus (Mouse)).